Here is a 237-residue protein sequence, read N- to C-terminus: Glutathione S-transferase L1 (237 aa).

The GST N-terminal domain maps to 29 to 110 (GTTRLYISYT…YVDSNFDGPS (82 aa)). Glutathione is bound by residues 39–40 (CP), 67–68 (NR), 81–82 (KV), and 94–95 (ES). The region spanning 112–232 (YPEDSAKREF…KTDSEYVVNY (121 aa)) is the GST C-terminal domain.

Belongs to the GST superfamily. Lambda family.

It localises to the cytoplasm. The protein localises to the cytosol. It carries out the reaction RX + glutathione = an S-substituted glutathione + a halide anion + H(+). Its function is as follows. Catalyzes the glutathione-dependent reduction of S-glutathionylquercetin to quercetin. In vitro, possesses glutathione-dependent thiol transferase activity toward 2-hydroxyethyl disulfide (HED). The sequence is that of Glutathione S-transferase L1 (GSTL1) from Arabidopsis thaliana (Mouse-ear cress).